The chain runs to 1180 residues: Polyamine-transporting ATPase 13A2 (1180 aa).

Residues 1-44 are Cytoplasmic-facing; sequence MSADSSPLVGSTPTGYGTLTIGTSIDPLSSSVSSVRLSGYCGSP. An intramembrane segment occupies 45–65; that stretch reads WRVIGYHVVVWMMAGIPLLLF. The Cytoplasmic segment spans residues 66-235; that stretch reads RWKPLWGVRL…KSYPQLLVDE (170 aa). A Phosphoserine modification is found at S151. The helical transmembrane segment at 236-253 threads the bilayer; the sequence is ALNPYYGFQAFSIALWLA. At 254–256 the chain is on the lumenal side; the sequence is DHY. The helical transmembrane segment at 257–276 threads the bilayer; it reads YWYALCIFLISSISICLSLY. Residues 277–427 are Cytoplasmic-facing; it reads KTRKQSQTLR…NFKFYKHSMK (151 aa). The helical transmembrane segment at 428-448 threads the bilayer; sequence FVAALSVLALLGTIYSIFILY. The Lumenal portion of the chain corresponds to 449-463; the sequence is RNRVPLNEIVIRALD. A helical transmembrane segment spans residues 464–484; that stretch reads LVTVVVPPALPAAMTVCTLYA. Topologically, residues 485–930 are cytoplasmic; that stretch reads QSRLRRQGIF…REGRCSLDTS (446 aa). The 4-aspartylphosphate intermediate role is filled by D513. Positions 878 and 882 each coordinate Mg(2+). Residues 931–951 form a helical membrane-spanning segment; it reads FSVFKYMALYSLTQFISVLIL. At 952-957 the chain is on the lumenal side; sequence YTINTN. The chain crosses the membrane as a helical span at residues 958–978; sequence LGDLQFLAIDLVITTTVAVLM. Topologically, residues 979–994 are cytoplasmic; the sequence is SRTGPALVLGRVRPPG. The chain crosses the membrane as a helical span at residues 995–1015; sequence ALLSVPVLSSLLLQMVLVTGV. Residues 1016–1048 are Lumenal-facing; it reads QLGGYFLTLAQPWFVPLNRTVAAPDNLPNYENT. N1033 is a glycosylation site (N-linked (GlcNAc...) asparagine). The chain crosses the membrane as a helical span at residues 1049-1069; sequence VVFSLSSFQYLILAAAVSKGA. Residues 1070–1080 are Cytoplasmic-facing; the sequence is PFRRPLYTNVP. A helical transmembrane segment spans residues 1081 to 1101; that stretch reads FLVALALLSSVLVGLVLVPGL. At 1102–1117 the chain is on the lumenal side; it reads LQGPLALRNITDTGFK. A glycan (N-linked (GlcNAc...) asparagine) is linked at N1110. The helical transmembrane segment at 1118 to 1138 threads the bilayer; that stretch reads LLLLGLVTLNFVGAFMLESVL. The Cytoplasmic segment spans residues 1139–1180; sequence DQCLPACLRRLRPKRASKKRFKQLERELAEQPWPPLPAGPLR.

This sequence belongs to the cation transport ATPase (P-type) (TC 3.A.3) family. Type V subfamily. In terms of assembly, interacts with MYCBP2; the interaction inhibits the ubiquitination of TSC2 by MYCBP2. Interacts with HDAC6; the interaction results in recruitment of HDAC6 to lysosomes to promote CTTN deacetylation. In terms of processing, autophosphorylated. Accumulates in an inactive autophosphorylated state and autophosphorylation is stimulated by phosphatidic acid and phosphatidylinositol 3,5-bisphosphate but not by Mn(2+) or Zn(2+). The presence of spermine results in a dose-dependent reduction in autophosphorylation. As to expression, expressed in brain; protein levels are markedly increased in brain from subjects with Parkinson disease and subjects with dementia with Lewy bodies. Detected in pyramidal neurons located throughout the cingulate cortex (at protein level). In the substantia nigra, it is found in neuromelanin-positive dopaminergic neurons (at protein level).

The protein localises to the lysosome membrane. It is found in the late endosome membrane. Its subcellular location is the endosome. It localises to the multivesicular body membrane. The protein resides in the cytoplasmic vesicle. The protein localises to the autophagosome membrane. The enzyme catalyses spermidine(out) + ATP + H2O = spermidine(in) + ADP + phosphate + H(+). It catalyses the reaction spermine(out) + ATP + H2O = spermine(in) + ADP + phosphate + H(+). With respect to regulation, accumulates in an inactive autophosphorylated state. The presence of spermine results in a dose-dependent reduction in autophosphorylation. ATPase which acts as a lysosomal polyamine exporter with high affinity for spermine. Also stimulates cellular uptake of polyamines and protects against polyamine toxicity. Plays a role in intracellular cation homeostasis and the maintenance of neuronal integrity. Contributes to cellular zinc homeostasis. Confers cellular protection against Mn(2+) and Zn(2+) toxicity and mitochondrial stress. Required for proper lysosomal and mitochondrial maintenance. Regulates the autophagy-lysosome pathway through the control of SYT11 expression at both transcriptional and post-translational levels. Facilitates recruitment of deacetylase HDAC6 to lysosomes to deacetylate CTTN, leading to actin polymerization, promotion of autophagosome-lysosome fusion and completion of autophagy. Promotes secretion of exosomes as well as secretion of SCNA via exosomes. Plays a role in lipid homeostasis. The sequence is that of Polyamine-transporting ATPase 13A2 from Homo sapiens (Human).